Consider the following 294-residue polypeptide: Phosphoprotein (294 aa).

The segment at 12-28 (MGNEAAKAAEAFQRSLK) is binding to monomeric RNA-free nucleoprotein. Positions 52 to 97 (KPTISKSTKVTTPPERRNAWGEKPDTTRNQTEEARNEATLEDTSRL) are disordered. Residues 65-97 (PERRNAWGEKPDTTRNQTEEARNEATLEDTSRL) are compositionally biased toward basic and acidic residues. Serine 106 bears the Phosphoserine mark. The segment at 123–128 (KKKVTF) is binding to host phosphatase PP1. The tract at residues 135–157 (RYTKLEMEALELLSDNEDDDAES) is binding to protein M2-1. A phosphoserine mark is found at serine 148, serine 157, serine 158, serine 168, and serine 171. An oligomerization and binding to RNA-directed RNA polymerase L region spans residues 169–194 (ALSLEARLESIDEKLSMILGLLRTLN). Residues 234 to 294 (MKEEAKQKSK…PDDDLYSLTM (61 aa)) form a disordered region. The tract at residues 251 to 279 (LTEKAKELNKIVEDESTSGESEEEEEEED) is binding to RNA-directed RNA polymerase L. Residues 253–263 (EKAKELNKIVE) are compositionally biased toward basic and acidic residues. Over residues 264 to 294 (DESTSGESEEEEEEEDEEESNPDDDLYSLTM) the composition is skewed to acidic residues. The segment at 281 to 294 (EESNPDDDLYSLTM) is binding to the N-RNA complex.

It belongs to the pneumoviridae phosphoprotein P family. As to quaternary structure, homotetramer. Interacts with protein M2-1; the interaction between the two tetramers is required for the anti-termination and elongation transcriptional activities of protein M2-1. Interacts with host phosphatase PP1; this interaction recruits PP1 to the inclusion bodies. Formation of a complex PP1/M2-1/P allows P to target host PP1 phosphatase to the M2-1 substrate. Interacts with the nucleoprotein N; the phosphorylated phosphoprotein P binds to N-RNA complex. Interacts with the monomeric RNA-free nucleoprotein N. Interacts with RNA-directed RNA polymerase L (via N-terminus); the association of P and L forms the polymerase complex. Post-translationally, constitutively phosphorylated by host.

The protein localises to the virion. Its subcellular location is the host cytoplasm. Its function is as follows. Plays critical roles in regulating RNA replication and transcription through its interactions with multiple proteins. Tethers the RNA-directed RNA polymerase L to the nucleoprotein-RNA complex. Recruits the M2-1 protein, a processivity factor that is required for efficient transcription of viral RNA. Acts as a chaperone for neo-synthesized nucleoprotein by forming an N-P complex that preserves N in a monomeric and RNA-free state and prevents the association of nascent N with host cell RNAs. Recruits the host phosphatase PP1 to inclusion bodies to regulate viral transcription. This chain is Phosphoprotein, found in Avian metapneumovirus (isolate Canada goose/Minnesota/15a/2001) (AMPV).